Reading from the N-terminus, the 1154-residue chain is PAN2-PAN3 deadenylation complex catalytic subunit pan2 (1154 aa).

WD repeat units lie at residues 20–59 (GLPT…RYTS), 102–145 (THDE…DKLR), and 276–315 (ATVS…HFNE). Positions 316-451 (MSKEVEFADV…GARISGESED (136 aa)) are linker. A USP domain is found at 452 to 821 (DPLLKYSNVE…SPCVLAFQVR (370 aa)). The region spanning 870–1048 (VALDTEFVDL…IEDARMALRL (179 aa)) is the Exonuclease domain. A divalent metal cation is bound by residues D873, E875, D982, and D1041. Positions 1092–1154 (PGTAVTMQNN…GEFFTGSPLK (63 aa)) are disordered. Polar residues-rich tracts occupy residues 1096–1109 (VTMQ…TPST) and 1132–1141 (LTPSNGTFSG).

It belongs to the peptidase C19 family. PAN2 subfamily. In terms of assembly, forms a heterotrimer with an asymmetric homodimer of the regulatory subunit pan3 to form the poly(A)-nuclease (PAN) deadenylation complex. A divalent metal cation serves as cofactor.

The protein resides in the cytoplasm. It catalyses the reaction Exonucleolytic cleavage of poly(A) to 5'-AMP.. Positively regulated by the regulatory subunit pan3. Catalytic subunit of the poly(A)-nuclease (PAN) deadenylation complex, one of two cytoplasmic mRNA deadenylases involved in mRNA turnover. PAN specifically shortens poly(A) tails of RNA and the activity is stimulated by poly(A)-binding protein pab1. PAN deadenylation is followed by rapid degradation of the shortened mRNA tails by the CCR4-NOT complex. Deadenylated mRNAs are then degraded by two alternative mechanisms, namely exosome-mediated 3'-5' exonucleolytic degradation, or deadenylation-dependent mRNA decaping and subsequent 5'-3' exonucleolytic degradation by xrn1. May also be involved in post-transcriptional maturation of mRNA poly(A) tails. This Emericella nidulans (strain FGSC A4 / ATCC 38163 / CBS 112.46 / NRRL 194 / M139) (Aspergillus nidulans) protein is PAN2-PAN3 deadenylation complex catalytic subunit pan2.